We begin with the raw amino-acid sequence, 164 residues long: Phosphopantetheine adenylyltransferase (164 aa).

Ser9 is a binding site for substrate. ATP is bound by residues 9 to 10 and His17; that span reads SF. The substrate site is built by Lys41, Leu73, and Lys87. Residues 88-90, Glu98, and 123-129 contribute to the ATP site; these read GLR and NSFLSSS.

Belongs to the bacterial CoaD family. In terms of assembly, homohexamer. Mg(2+) is required as a cofactor.

The protein localises to the cytoplasm. The catalysed reaction is (R)-4'-phosphopantetheine + ATP + H(+) = 3'-dephospho-CoA + diphosphate. Its pathway is cofactor biosynthesis; coenzyme A biosynthesis; CoA from (R)-pantothenate: step 4/5. Reversibly transfers an adenylyl group from ATP to 4'-phosphopantetheine, yielding dephospho-CoA (dPCoA) and pyrophosphate. This chain is Phosphopantetheine adenylyltransferase, found in Clostridium kluyveri (strain ATCC 8527 / DSM 555 / NBRC 12016 / NCIMB 10680 / K1).